The sequence spans 22 residues: uncharacterized protein (22 aa).

This sequence belongs to the asfivirus C84L family.

This is an uncharacterized protein from Ornithodoros (relapsing fever ticks).